The chain runs to 80 residues: Exodeoxyribonuclease 7 small subunit (80 aa).

Belongs to the XseB family. In terms of assembly, heterooligomer composed of large and small subunits.

The protein resides in the cytoplasm. It carries out the reaction Exonucleolytic cleavage in either 5'- to 3'- or 3'- to 5'-direction to yield nucleoside 5'-phosphates.. Functionally, bidirectionally degrades single-stranded DNA into large acid-insoluble oligonucleotides, which are then degraded further into small acid-soluble oligonucleotides. In Edwardsiella ictaluri (strain 93-146), this protein is Exodeoxyribonuclease 7 small subunit.